The chain runs to 100 residues: MRSFLYGILAFAVLARSSAVAAFPIPDESRPLSKTSPDTVAPRSLRVEAQEVIQSGRGDGYGGFWKNIIPSTNKIIKKPDIKIGKLIEAAKKAKKKMTKS.

Residues 1 to 22 (MRSFLYGILAFAVLARSSAVAA) form the signal peptide. The short motif at 43 to 57 (RSLRVEAQEVIQSGR) is the RxLR-dEER element. The Calmodulin-binding motif signature appears at 78 to 82 (KPDIK).

It belongs to the RxLR effector family. As to quaternary structure, interacts with the host calmodulin.

The protein resides in the secreted. The protein localises to the host cell. In terms of biological role, secreted effector that associates with calmodulin to interfere with plant defense-associated calcium signaling in hosts. The protein is RxLR effector protein PITG_18683 of Phytophthora infestans (strain T30-4) (Potato late blight agent).